A 140-amino-acid polypeptide reads, in one-letter code: Large ribosomal subunit protein bL34m (140 aa).

Belongs to the bacterial ribosomal protein bL34 family. Component of the mitochondrial large ribosomal subunit (mt-LSU). Mature N.crassa 74S mitochondrial ribosomes consist of a small (37S) and a large (54S) subunit. The 37S small subunit contains a 16S ribosomal RNA (16S mt-rRNA) and 32 different proteins. The 54S large subunit contains a 23S rRNA (23S mt-rRNA) and 42 different proteins.

The protein resides in the mitochondrion. In terms of biological role, component of the mitochondrial ribosome (mitoribosome), a dedicated translation machinery responsible for the synthesis of mitochondrial genome-encoded proteins, including at least some of the essential transmembrane subunits of the mitochondrial respiratory chain. The mitoribosomes are attached to the mitochondrial inner membrane and translation products are cotranslationally integrated into the membrane. The polypeptide is Large ribosomal subunit protein bL34m (mrpl34) (Neurospora crassa (strain ATCC 24698 / 74-OR23-1A / CBS 708.71 / DSM 1257 / FGSC 987)).